Consider the following 149-residue polypeptide: Arginine repressor (149 aa).

It belongs to the ArgR family.

It is found in the cytoplasm. Its pathway is amino-acid biosynthesis; L-arginine biosynthesis [regulation]. In terms of biological role, regulates arginine biosynthesis genes. This is Arginine repressor from Exiguobacterium sp. (strain ATCC BAA-1283 / AT1b).